A 444-amino-acid polypeptide reads, in one-letter code: Alpha-N-acetylgalactosaminidase (444 aa).

Residues 30 to 31, D52, N80, 101 to 104, H107, 121 to 122, and N150 contribute to the NAD(+) site; these read LR, WEWH, and EV. Y179 contacts substrate. NAD(+) is bound at residue 208–212; it reads SEAKW. Substrate is bound by residues R213, 225–228, and Y307; that span reads YPTH. An NAD(+)-binding site is contributed by Y225.

It belongs to the Gfo/Idh/MocA family. Glycosyl hydrolase 109 subfamily. The cofactor is NAD(+).

The enzyme catalyses Cleavage of non-reducing alpha-(1-&gt;3)-N-acetylgalactosamine residues from human blood group A and AB mucin glycoproteins, Forssman hapten and blood group A lacto series glycolipids.. In terms of biological role, glycosidase that has specific alpha-N-acetylgalactosaminidase activity. In Elizabethkingia meningoseptica (Chryseobacterium meningosepticum), this protein is Alpha-N-acetylgalactosaminidase (nagA).